The chain runs to 146 residues: Large ribosomal subunit protein uL15 (146 aa).

The segment at 1–54 is disordered; that stretch reads MKLHELKPAAGSRKAPKRVGRGTGSGLGRNAGKGEKGQNARSGGGVRPGFEGGQ. 2 stretches are compositionally biased toward gly residues: residues 21 to 31 and 42 to 52; these read RGTGSGLGRNA and SGGGVRPGFEG.

It belongs to the universal ribosomal protein uL15 family. In terms of assembly, part of the 50S ribosomal subunit.

Functionally, binds to the 23S rRNA. The polypeptide is Large ribosomal subunit protein uL15 (Clostridium acetobutylicum (strain ATCC 824 / DSM 792 / JCM 1419 / IAM 19013 / LMG 5710 / NBRC 13948 / NRRL B-527 / VKM B-1787 / 2291 / W)).